A 71-amino-acid chain; its full sequence is General transcription factor IIH subunit 5 (71 aa).

Phosphothreonine is present on Thr-69.

It belongs to the TFB5 family. In terms of assembly, component of the 7-subunit TFIIH core complex composed of XPB/ERCC3, XPD/ERCC2, GTF2H1, GTF2H2, GTF2H3, GTF2H4 and GTF2H5, which is active in NER. The core complex associates with the 3-subunit CDK-activating kinase (CAK) module composed of CCNH/cyclin H, CDK7 and MNAT1 to form the 10-subunit holoenzyme (holo-TFIIH) active in transcription. Part of TBP-based Pol II pre-initiation complex (PIC), in which Pol II core assembles with general transcription factors and other specific initiation factors including GTF2E1, GTF2E2, GTF2F1, GTF2F2, TCEA1, ERCC2, ERCC3, GTF2H2, GTF2H3, GTF2H4, GTF2H5, GTF2A1, GTF2A2, GTF2B and TBP; this large multi-subunit PIC complex mediates DNA unwinding and targets Pol II core to the transcription start site where the first phosphodiester bond forms.

It is found in the nucleus. The protein resides in the cytoplasm. Functionally, component of the general transcription and DNA repair factor IIH (TFIIH) core complex, which is involved in general and transcription-coupled nucleotide excision repair (NER) of damaged DNA and, when complexed to CAK, in RNA transcription by RNA polymerase II. In NER, TFIIH acts by opening DNA around the lesion to allow the excision of the damaged oligonucleotide and its replacement by a new DNA fragment. In transcription, TFIIH has an essential role in transcription initiation. When the pre-initiation complex (PIC) has been established, TFIIH is required for promoter opening and promoter escape. Phosphorylation of the C-terminal tail (CTD) of the largest subunit of RNA polymerase II by the kinase module CAK controls the initiation of transcription. Necessary for the stability of the TFIIH complex and for the presence of normal levels of TFIIH in the cell. The chain is General transcription factor IIH subunit 5 from Mus musculus (Mouse).